A 285-amino-acid polypeptide reads, in one-letter code: V-type proton ATPase subunit D (285 aa).

Positions 208 to 226 (QKTKENAEKADSVTKEEHQ) are enriched in basic and acidic residues. Positions 208–285 (QKTKENAEKA…ENDSDEEVIF (78 aa)) are disordered. Phosphoserine is present on Ser219. Over residues 227 to 236 (GGSNTLQQTK) the composition is skewed to polar residues. A compositionally biased stretch (basic and acidic residues) spans 248-263 (VGKEVINEVENSKDDT). The span at 271 to 285 (TDDEEENDSDEEVIF) shows a compositional bias: acidic residues.

This sequence belongs to the V-ATPase D subunit family. As to quaternary structure, V-ATPase is a heteromultimeric enzyme composed of a peripheral catalytic V1 complex (components A to H) attached to an integral membrane V0 proton pore complex (components: a, c, c', c'', d, e, f and VOA1).

The protein localises to the vacuole membrane. Functionally, subunit of the V1 complex of vacuolar(H+)-ATPase (V-ATPase), a multisubunit enzyme composed of a peripheral complex (V1) that hydrolyzes ATP and a membrane integral complex (V0) that translocates protons. V-ATPase is responsible for acidifying and maintaining the pH of intracellular compartments. In Schizosaccharomyces pombe (strain 972 / ATCC 24843) (Fission yeast), this protein is V-type proton ATPase subunit D (vma8).